A 137-amino-acid polypeptide reads, in one-letter code: Cofilin (137 aa).

An ADF-H domain is found at 5-135 (GVKVSPECLE…AYETVLEKVT (131 aa)).

It belongs to the actin-binding proteins ADF family.

It is found in the cytoplasm. It localises to the cytoskeleton. The protein localises to the nucleus matrix. Its function is as follows. Controls reversibly actin polymerization and depolymerization in a pH-sensitive manner. It has the ability to bind G- and F-actin in a 1:1 ratio of cofilin to actin. Binding to F-actin is regulated by tropomyosin. It is the major component of intranuclear and cytoplasmic actin rods. Required for accumulation of actin at the cell division site via depolymerizing actin at the cell ends. In association with myosin II has a role in the assembly of the contractile ring via severing actin filaments. Involved in the maintenance of the contractile ring once formed. In association with profilin and capping protein, has a role in the mitotic reorganization of the actin cytoskeleton. Severs actin filaments (F-actin). The sequence is that of Cofilin (cof1) from Schizosaccharomyces pombe (strain 972 / ATCC 24843) (Fission yeast).